We begin with the raw amino-acid sequence, 181 residues long: CASP-like protein UU-1 (181 aa).

The Cytoplasmic portion of the chain corresponds to 1 to 30 (MTMELESQEVVVETTTAAAAARAASAAHVR). The chain crosses the membrane as a helical span at residues 31–51 (TTVALRLLAFAASLAAAVVVA). The Extracellular portion of the chain corresponds to 52 to 65 (TNRQERWGITVTFK). A helical transmembrane segment spans residues 66–86 (MFAVWEAFVAINFACAAYALL). Residues 87 to 107 (TAVFVKKLVSKHWLHHMDQFT) are Cytoplasmic-facing. A helical transmembrane segment spans residues 108–128 (VNLQAASTAGAGAVGSVAMWG). Over 129–147 (NEPSGWYAVCRLYRLYCDR) the chain is Extracellular. A helical membrane pass occupies residues 148–168 (GAVSLALAFVAFVAFGVASSL). Over 169–181 (SRYPRAPPPPAPR) the chain is Cytoplasmic.

It belongs to the Casparian strip membrane proteins (CASP) family. In terms of assembly, homodimer and heterodimers.

The protein resides in the cell membrane. The sequence is that of CASP-like protein UU-1 from Sorghum bicolor (Sorghum).